Consider the following 197-residue polypeptide: Peptide deformylase (197 aa).

Fe cation is bound by residues cysteine 106 and histidine 148. Glutamate 149 is a catalytic residue. Position 152 (histidine 152) interacts with Fe cation.

It belongs to the polypeptide deformylase family. Fe(2+) serves as cofactor.

The catalysed reaction is N-terminal N-formyl-L-methionyl-[peptide] + H2O = N-terminal L-methionyl-[peptide] + formate. Its function is as follows. Removes the formyl group from the N-terminal Met of newly synthesized proteins. Requires at least a dipeptide for an efficient rate of reaction. N-terminal L-methionine is a prerequisite for activity but the enzyme has broad specificity at other positions. The polypeptide is Peptide deformylase (Mycobacterium marinum (strain ATCC BAA-535 / M)).